Consider the following 611-residue polypeptide: Dihydroxy-acid dehydratase (611 aa).

Asp81 provides a ligand contact to Mg(2+). Residue Cys122 participates in [2Fe-2S] cluster binding. Mg(2+) contacts are provided by Asp123 and Lys124. N6-carboxylysine is present on Lys124. Cys195 lines the [2Fe-2S] cluster pocket. Glu491 is a Mg(2+) binding site. Ser517 (proton acceptor) is an active-site residue.

It belongs to the IlvD/Edd family. In terms of assembly, homodimer. The cofactor is [2Fe-2S] cluster. It depends on Mg(2+) as a cofactor.

The catalysed reaction is (2R)-2,3-dihydroxy-3-methylbutanoate = 3-methyl-2-oxobutanoate + H2O. The enzyme catalyses (2R,3R)-2,3-dihydroxy-3-methylpentanoate = (S)-3-methyl-2-oxopentanoate + H2O. Its pathway is amino-acid biosynthesis; L-isoleucine biosynthesis; L-isoleucine from 2-oxobutanoate: step 3/4. It participates in amino-acid biosynthesis; L-valine biosynthesis; L-valine from pyruvate: step 3/4. Its function is as follows. Functions in the biosynthesis of branched-chain amino acids. Catalyzes the dehydration of (2R,3R)-2,3-dihydroxy-3-methylpentanoate (2,3-dihydroxy-3-methylvalerate) into 2-oxo-3-methylpentanoate (2-oxo-3-methylvalerate) and of (2R)-2,3-dihydroxy-3-methylbutanoate (2,3-dihydroxyisovalerate) into 2-oxo-3-methylbutanoate (2-oxoisovalerate), the penultimate precursor to L-isoleucine and L-valine, respectively. The polypeptide is Dihydroxy-acid dehydratase (Actinobacillus pleuropneumoniae serotype 5b (strain L20)).